A 1392-amino-acid polypeptide reads, in one-letter code: DNA-directed RNA polymerase subunit beta'' (1392 aa).

Residues Cys-224, Cys-295, Cys-302, and Cys-305 each contribute to the Zn(2+) site.

It belongs to the RNA polymerase beta' chain family. RpoC2 subfamily. In terms of assembly, in plastids the minimal PEP RNA polymerase catalytic core is composed of four subunits: alpha, beta, beta', and beta''. When a (nuclear-encoded) sigma factor is associated with the core the holoenzyme is formed, which can initiate transcription. It depends on Zn(2+) as a cofactor.

The protein resides in the plastid. It localises to the chloroplast. The catalysed reaction is RNA(n) + a ribonucleoside 5'-triphosphate = RNA(n+1) + diphosphate. DNA-dependent RNA polymerase catalyzes the transcription of DNA into RNA using the four ribonucleoside triphosphates as substrates. This chain is DNA-directed RNA polymerase subunit beta'', found in Eucalyptus globulus subsp. globulus (Tasmanian blue gum).